The following is a 150-amino-acid chain: Endoribonuclease YbeY (150 aa).

Zn(2+) contacts are provided by His116, His120, and His126.

It belongs to the endoribonuclease YbeY family. Zn(2+) serves as cofactor.

Its subcellular location is the cytoplasm. In terms of biological role, single strand-specific metallo-endoribonuclease involved in late-stage 70S ribosome quality control and in maturation of the 3' terminus of the 16S rRNA. The chain is Endoribonuclease YbeY from Mesomycoplasma hyopneumoniae (strain 232) (Mycoplasma hyopneumoniae).